An 854-amino-acid polypeptide reads, in one-letter code: A-kinase anchor protein 4 (854 aa).

Positions 1-188 (MMAYSDTTMM…MTAAKNTNNN (188 aa)) are excised as a propeptide. 6 positions are modified to phosphoserine: Ser-96, Ser-130, Ser-190, Ser-213, Ser-226, and Ser-272. Residues 184 to 207 (NTNNNQSPSAPPAKPPSTQRAVIS) form a disordered region. Residues 219–232 (FYVNRLSSLVIQMA) are PKA-RI and PKA-RII subunit binding domain. The tract at residues 287–323 (RGTGEESREGGQKSFLYSELSNKSKSGDKQMSQRESK) is disordered. Basic and acidic residues predominate over residues 288-297 (GTGEESREGG). At Ser-300 the chain carries Phosphoserine. Tyr-303 carries the phosphotyrosine modification. A phosphoserine mark is found at Ser-304 and Ser-307. Basic and acidic residues predominate over residues 311–323 (KSGDKQMSQRESK). Residues 336–345 (YANQVASDMM) are PKA-RI-alpha subunit binding domain. Phosphoserine is present on residues Ser-342, Ser-432, Ser-443, Ser-445, Ser-447, Ser-450, Ser-464, and Ser-492. Thr-506 carries the post-translational modification Phosphothreonine. Residues Ser-536, Ser-581, Ser-627, and Ser-703 each carry the phosphoserine modification.

This sequence belongs to the AKAP110 family. In terms of assembly, interacts with PRKAR1A and PRKAR2A. Interacts with ENO4. Interacts with QRICH2. Phosphorylated by STK33 during sperm flagella assembly. In terms of tissue distribution, testis specific; only expressed in round spermatids.

The protein resides in the cell projection. It is found in the cilium. The protein localises to the flagellum. Major structural component of sperm fibrous sheath. Plays a role in sperm motility. The sequence is that of A-kinase anchor protein 4 from Homo sapiens (Human).